Here is a 126-residue protein sequence, read N- to C-terminus: Small ribosomal subunit protein uS8 (126 aa).

It belongs to the universal ribosomal protein uS8 family. Part of the 30S ribosomal subunit. Contacts proteins S5 and S12.

In terms of biological role, one of the primary rRNA binding proteins, it binds directly to 16S rRNA central domain where it helps coordinate assembly of the platform of the 30S subunit. The chain is Small ribosomal subunit protein uS8 from Lawsonia intracellularis (strain PHE/MN1-00).